A 412-amino-acid polypeptide reads, in one-letter code: MITRQVLILGHWNSRFRAFIHIHSAGQPLFSTMTAAFPIQPVARFAGKSELVKRPKEFACFSYDADHKFLLGAQSLKWYYTPDLNVDLSKGFESFIKHDDSVDEHLDSLLTTIADYEQKTSKPIDAHIVTWRGMMTKIMAAPFDDDDGFEMNATLYRGCIFIEENHAYKQASRANERPWNGPIPQEVMQYWGYKFETLSTLPKPWGQTSRDFIESRPDHVVNNKEQYCSVVRTGIGKTILCIGGEVDAIWDDKPRTQGDPINWVELKTSAVIQNERQANNFERKLMKFWIQSFLLGVPKIIVGFRTQDGLLVETKEFRTMEIPLMVKKNGRPKWDGDTCVNFANGFLEWLRHTITDEGVWRIKRRPRSAEIEVFKVEEVGHGDIITDEFMNWRIKLELRQAQPPTEDNETEE.

E196 contributes to the a divalent metal cation binding site. Substrate contacts are provided by C228 and E245. The a divalent metal cation site is built by D247, E265, and L266. The substrate site is built by K267 and Q291.

It belongs to the DXO/Dom3Z family. In terms of assembly, interacts with exr-1/rat1; the interaction is direct, stabilizes exr-1 protein structure and stimulates its exoribonuclease activity. The interaction also stimulates rai1 pyrophosphohydrolase activity, probably by recruiting it to mRNA substrates. A divalent metal cation serves as cofactor.

It localises to the nucleus. It carries out the reaction a 5'-end NAD(+)-phospho-ribonucleoside in mRNA + H2O = a 5'-end phospho-ribonucleoside in mRNA + NAD(+) + H(+). It catalyses the reaction a 5'-end (N(7)-methyl 5'-triphosphoguanosine)-ribonucleoside-ribonucleotide in mRNA + H2O = a (N(7)-methyl 5'-triphosphoguanosine)-nucleoside + a 5'-end phospho-ribonucleoside in mRNA + H(+). The catalysed reaction is a 5'-end triphospho-ribonucleoside in mRNA + H2O = a 5'-end phospho-ribonucleoside in mRNA + diphosphate + H(+). In terms of biological role, decapping enzyme for NAD-capped RNAs: specifically hydrolyzes the nicotinamide adenine dinucleotide (NAD) cap from a subset of RNAs by removing the entire NAD moiety from the 5'-end of an NAD-capped RNA. The NAD-cap is present at the 5'-end of some RNAs and snoRNAs. In contrast to the canonical 5'-end N7 methylguanosine (m7G) cap, the NAD cap promotes mRNA decay. Also acts as a non-canonical decapping enzyme that removes the entire cap structure of m7G capped or incompletely capped RNAs. Has decapping activity toward incomplete 5'-end m7G cap mRNAs such as unmethylated 5'-end-capped RNA (cap0), while it has no activity toward 2'-O-ribose methylated m7G cap (cap1). Also possesses RNA 5'-pyrophosphohydrolase activity by hydrolyzing the 5'-end triphosphate to release pyrophosphates. Stimulates exoribonuclease activity of Rat1, allowing it to degrade RNAs with stable secondary structure more effectively. This chain is Decapping nuclease RAI1 (rai1), found in Neurospora crassa (strain ATCC 24698 / 74-OR23-1A / CBS 708.71 / DSM 1257 / FGSC 987).